We begin with the raw amino-acid sequence, 835 residues long: uncharacterized protein (835 aa).

Disordered stretches follow at residues 1 to 38, 317 to 477, 489 to 668, 721 to 750, and 810 to 835; these read MKTSRLSTVPTSSSSTSTSSSPSSSSGSGSSTNTVGSR, DFDL…QSGR, SLSK…IKRR, DLENNNNNNSNSNSNSNSNNNSKRSSVSSF, and QEQQEGEQQEERQQEQILDEDDELMF. Low complexity-rich tracts occupy residues 7–37, 328–351, and 361–395; these read STVPTSSSSTSTSSSPSSSSGSGSSTNTVGS, NNNNNNDNNNNNNTSTTRSKTPTT, and SSTNTTPTTTTTTTTTTTPNKTQSSSSTSLRSGSS. 2 stretches are compositionally biased toward polar residues: residues 396–406 and 415–424; these read IGNRTEVSSSI and IIRSKSSLGT. Positions 432–442 are enriched in gly residues; that stretch reads GGSGGGGGGGM. Residues 449–477 are compositionally biased toward polar residues; sequence PISKTPTTMITKTASSSSPNLATSTQSGR. Residues 489 to 510 show a composition bias toward low complexity; it reads SLSKQSSSSNLTRSLPPIIKSP. Residues 511 to 521 show a composition bias toward pro residues; the sequence is ISPPGPTPPAP. A compositionally biased stretch (low complexity) spans 522–629; sequence TLTKSKSTPS…STTSSATKKS (108 aa). The segment covering 631–640 has biased composition (polar residues); the sequence is ITKTNPTDEQ. Low complexity-rich tracts occupy residues 641-664 and 724-750; these read TTTPKSITKTTTTTTTANSTSTSS and NNNNNNSNSNSNSNSNNNSKRSSVSSF. The segment covering 826 to 835 has biased composition (acidic residues); the sequence is ILDEDDELMF.

This is an uncharacterized protein from Dictyostelium discoideum (Social amoeba).